Reading from the N-terminus, the 244-residue chain is uncharacterized protein (244 aa).

The region spanning 19–196 is the FCP1 homology domain; the sequence is ATDNRKLVIL…ACVIRYLKHL (178 aa).

This is an uncharacterized protein from Schizosaccharomyces pombe (strain 972 / ATCC 24843) (Fission yeast).